The chain runs to 1134 residues: ATP-dependent helicase/deoxyribonuclease subunit B (1134 aa).

8–15 (GRAGSGKS) is an ATP binding site. Residues Cys-771, Cys-1089, Cys-1092, and Cys-1098 each coordinate [4Fe-4S] cluster.

It belongs to the helicase family. AddB/RexB type 1 subfamily. As to quaternary structure, heterodimer of AddA and AddB. The cofactor is Mg(2+). Requires [4Fe-4S] cluster as cofactor.

In terms of biological role, the heterodimer acts as both an ATP-dependent DNA helicase and an ATP-dependent, dual-direction single-stranded exonuclease. Recognizes the chi site generating a DNA molecule suitable for the initiation of homologous recombination. The AddB subunit has 5' -&gt; 3' nuclease activity but not helicase activity. This chain is ATP-dependent helicase/deoxyribonuclease subunit B, found in Clostridium novyi (strain NT).